The following is a 743-amino-acid chain: Protein will decrease acetylation (743 aa).

WD repeat units follow at residues 389–428 (ERSR…CRGK), 493–524 (LRGH…MRCW), 535–576 (YRSH…ALII), 577–618 (YAGH…LMRV), 619–660 (FADC…QLAE), and 661–702 (LKDH…PMSD).

Belongs to the WD repeat TAF5 family. Component of the Spt-Ada-Gcn5 acetyltransferase (SAGA) complex consisting of wda/Taf5L, Saf6, Taf9, Taf10b, Taf12, Ada1, Spt3, Spt7, Spt20, Sf3b3, Sf3b5, Nipped-A/Tra1, a histone acetyltransferase (HAT) module made up of Gcn5, Ada2b (Isoform B), Ada3 and Sgf29, and a deubiquitinase (DUB) module made up of not/nonstop, Sgf11 and e(y)2 tethered to SAGA by Atxn7. Not essential for the assembly or integrity of the SAGA complex. Not a component of the Ada2a-containing ATAC complex.

The protein resides in the nucleus. Its subcellular location is the chromosome. Its function is as follows. Component of the transcription regulatory complex SAGA, a multiprotein complex that activates transcription by remodeling chromatin and mediating histone acetylation and deubiquitination. The SAGA complex predominantly acetylates histone H3. Involved in acetylation of histone H3 on 'Lys-10' (H3K9ac) by the SAGA complex in the larval central nervous system. Involved in SAGA complex coactivator functions. Required for oogenesis. The chain is Protein will decrease acetylation from Drosophila melanogaster (Fruit fly).